A 187-amino-acid polypeptide reads, in one-letter code: Peptidoglycan-recognition protein 3 (187 aa).

An N-terminal signal peptide occupies residues 1-19 (MKAFLVALLISIELALVFA). Disulfide bonds link Cys21–Cys144 and Cys58–Cys64. The N-acetylmuramoyl-L-alanine amidase domain occupies 43 to 170 (KPLKYVIINH…RTIRQTNSPG (128 aa)). N-linked (GlcNAc...) asparagine glycosylation occurs at Asn51.

The protein belongs to the N-acetylmuramoyl-L-alanine amidase 2 family.

Its subcellular location is the secreted. Functionally, peptidoglycan-recognition protein probably involved in innate immunity by binding to peptidoglycans (PGN) of bacteria and activating the prophenoloxidase (proPO) cascade immune response. Binds to 1,3-beta-D-glucan and PGN. The polypeptide is Peptidoglycan-recognition protein 3 (PGRP-3) (Holotrichia diomphalia (Korean black chafer)).